Here is a 330-residue protein sequence, read N- to C-terminus: Polygalacturonase inhibitor 2 (330 aa).

Residues 1–21 (MDKTMTLFLLLSTLLLTTSLA) form the signal peptide. 2 cysteine pairs are disulfide-bonded: C25/C55 and C56/C63. LRR repeat units lie at residues 69-93 (NHRVTSLIIQDGEISGQIPPEVGDL), 94-117 (PYLTSLIFRKLTNLTGHIQPTIAK), 118-141 (LKNLTFLRLSWTNLTGPVPEFLSQ), 142-166 (LKNLEYIDLSFNDLSGSIPSSLSSL), 167-192 (RKLEYLELSRNKLTGPIPESFGTFSG), 194-215 (VPSLFLSHNQLSGTIPKSLGNP), 217-237 (FYRIDLSRNKLQGDASILFGA), 238-260 (KKTTWIVDISRNMFQFDLSKVKL), 261-285 (AKTLNNLDMNHNGITGSIPAEWSKA), and 287-308 (FQLLNVSYNRLCGRIPKGEYIQ). N106, N120, and N130 each carry an N-linked (GlcNAc...) asparagine glycan. N-linked (GlcNAc...) asparagine glycosylation occurs at N291. Cystine bridges form between C298–C320 and C322–C329.

The protein belongs to the polygalacturonase-inhibiting protein family.

The protein resides in the secreted. Its subcellular location is the cell wall. It localises to the membrane. Functionally, inhibitor of fungal polygalacturonase. It is an important factor for plant resistance to phytopathogenic fungi. The sequence is that of Polygalacturonase inhibitor 2 (PGIP2) from Arabidopsis thaliana (Mouse-ear cress).